Here is a 154-residue protein sequence, read N- to C-terminus: UPF0178 protein in pahZ1 5'region (154 aa).

It belongs to the UPF0178 family.

This is UPF0178 protein in pahZ1 5'region from Paucimonas lemoignei (Pseudomonas lemoignei).